Reading from the N-terminus, the 512-residue chain is Monocarboxylate transporter 10 (512 aa).

The segment at 1-44 (MVPSQEEPAAERETNEAQPPGPAPSDDAPLPGPGPSDVSDVAAE) is disordered. Residues 1–63 (MVPSQEEPAA…AGSEPPVPPE (63 aa)) are Cytoplasmic-facing. Residues 64–84 (GGWGWLVMLAAMWCNGSVFGI) form a helical membrane-spanning segment. The Extracellular portion of the chain corresponds to 85–111 (QNAYGVLFVSMLDTFKAKDDDNMAFKT). A helical transmembrane segment spans residues 112 to 132 (AWVGSLSMGMIFFCCPIVSVF). Residues 133–141 (TDMFGCRRT) are Cytoplasmic-facing. A helical transmembrane segment spans residues 142–162 (AVVGAAVGFIGLMSSSFVSSI). Topologically, residues 163 to 168 (EPLYLT) are extracellular. A helical membrane pass occupies residues 169–189 (YGIIFACGCSFAYQPSLVILG). The Cytoplasmic segment spans residues 190–201 (HYFKKRLGLVNG). The helical transmembrane segment at 202 to 222 (IVTAGSSVFTILLPLLLGNLI) threads the bilayer. At 223 to 232 (SSVKLFNTLR) the chain is on the extracellular side. The chain crosses the membrane as a helical span at residues 233–253 (ILCIFMFVLFLAGFTYRPLVP). The Cytoplasmic portion of the chain corresponds to 254 to 291 (STKEKESGGSRSSFFSRRKLSPPKKVFNFALFKETTYA). At Ser260 the chain carries Phosphoserine. A helical membrane pass occupies residues 292-312 (VWAAGIPLALFGYFVPYVHLM). Topologically, residues 313 to 326 (NHVKERFQDVNNKE) are extracellular. Residues 327–347 (VLFMCIGITSGVGRLLFGRIA) form a helical membrane-spanning segment. Topologically, residues 348-362 (DYLPGVKKVYLQVLS) are cytoplasmic. The chain crosses the membrane as a helical span at residues 363–383 (FFFIGLMSMMIPLCSAFGALI). A topological domain (extracellular) is located at residue Ala384. The helical transmembrane segment at 385-405 (VCLAMGLFDGCFISIMAPIAF) threads the bilayer. Over 406–416 (ELVGPQDASQA) the chain is Cytoplasmic. A helical transmembrane segment spans residues 417-437 (IGFLLGFMSIPMTVGPPIAGL). At 438-448 (LHDKLGTYDVA) the chain is on the extracellular side. Residues 449–469 (FYLAGIPPFVGGVVLCLIPWI) traverse the membrane as a helical segment. The Cytoplasmic segment spans residues 470 to 512 (HSKKQRKISKNAGGEKMEKMLENQSSLLSGSSGIFKKDSASII). Phosphoserine is present on residues Ser495, Ser498, Ser500, and Ser501.

Belongs to the major facilitator superfamily. Monocarboxylate porter (TC 2.A.1.13) family. Post-translationally, not N-glycosylated. As to expression, highly expressed in small intestine, particularly in jejunum and ileum, scarcely in colon and substantially in kidney, liver and skeletal muscle. In the brain expression is low and appears to be restricted to a subset of neurons, microglia cells, and oligodendrocytes.

The protein resides in the cell membrane. It localises to the basolateral cell membrane. It catalyses the reaction L-tryptophan(in) = L-tryptophan(out). It carries out the reaction L-tyrosine(in) = L-tyrosine(out). The enzyme catalyses L-phenylalanine(in) = L-phenylalanine(out). The catalysed reaction is 3,3',5-triiodo-L-thyronine(out) = 3,3',5-triiodo-L-thyronine(in). It catalyses the reaction L-thyroxine(out) = L-thyroxine(in). Sodium- and proton-independent thyroid hormones and aromatic acids transporter. Mediates both uptake and efflux of 3,5,3'-triiodothyronine (T3) and 3,5,3',5'-tetraiodothyronine (T4) with high affinity, suggesting a role in the homeostasis of thyroid hormone levels. Responsible for low affinity bidirectional transport of the aromatic amino acids, such as phenylalanine, tyrosine, tryptophan and L-3,4-dihydroxyphenylalanine (L-dopa). Plays an important role in homeostasis of aromatic amino acids. This is Monocarboxylate transporter 10 (Slc16a10) from Mus musculus (Mouse).